A 347-amino-acid chain; its full sequence is E3 ubiquitin-protein ligase RNF146-B (347 aa).

An RING-type zinc finger spans residues 37–75 (CAICLQTCVHPVSLPCKHVFCYLCVKGASWLGKRCALCR). Glycyl lysine isopeptide (Lys-Gly) (interchain with G-Cter in ubiquitin) cross-links involve residues Lys-85, Lys-95, Lys-131, and Lys-176. One can recognise a WWE domain in the interval 92–168 (EELKAASRGN…EHGRRRKIKR (77 aa)). Disordered regions lie at residues 196 to 241 (SSAD…GTSL) and 257 to 347 (ERSH…VTEV). The segment covering 203–217 (SVPAQSGASVQSSSV) has biased composition (low complexity). The span at 282–296 (SIEETESDASSDSED) shows a compositional bias: acidic residues. A phosphoserine mark is found at Ser-288 and Ser-292. Over residues 304 to 322 (HSLTQQRLLVPNPSQTVSD) the composition is skewed to polar residues.

Interacts with poly-ADP-ribosylated AXIN1, AXIN2, BLZF1 and CASC3. In terms of processing, ubiquitinated; autoubiquitinated. Autoubiquitination is enhanced upon poly(ADP-ribose)-binding.

The protein localises to the cytoplasm. It localises to the cytosol. The catalysed reaction is S-ubiquitinyl-[E2 ubiquitin-conjugating enzyme]-L-cysteine + [acceptor protein]-L-lysine = [E2 ubiquitin-conjugating enzyme]-L-cysteine + N(6)-ubiquitinyl-[acceptor protein]-L-lysine.. Its pathway is protein modification; protein ubiquitination. In terms of biological role, E3 ubiquitin-protein ligase that specifically binds poly-ADP-ribosylated proteins and mediates their ubiquitination and subsequent degradation. Acts as an activator of the Wnt signaling pathway by mediating the ubiquitination of poly-ADP-ribosylated AXIN1 and AXIN2, 2 key components of the beta-catenin destruction complex. Acts in cooperation with tankyrase proteins (TNKS and TNKS2), which mediate poly-ADP-ribosylation of target proteins AXIN1, AXIN2, BLZF1, CASC3, TNKS and TNKS2. Recognizes and binds tankyrase-dependent poly-ADP-ribosylated proteins via its WWE domain and mediates their ubiquitination. The sequence is that of E3 ubiquitin-protein ligase RNF146-B (RNF146B) from Bos taurus (Bovine).